Consider the following 487-residue polypeptide: Ribulose bisphosphate carboxylase large chain (487 aa).

The substrate site is built by asparagine 127 and threonine 177. Lysine 179 functions as the Proton acceptor in the catalytic mechanism. Residue lysine 181 participates in substrate binding. 3 residues coordinate Mg(2+): lysine 205, aspartate 207, and glutamate 208. An N6-carboxylysine modification is found at lysine 205. The Proton acceptor role is filled by histidine 297. 3 residues coordinate substrate: arginine 298, histidine 330, and serine 382.

Belongs to the RuBisCO large chain family. Type I subfamily. As to quaternary structure, heterohexadecamer of 8 large chains and 8 small chains. The cofactor is Mg(2+).

It carries out the reaction 2 (2R)-3-phosphoglycerate + 2 H(+) = D-ribulose 1,5-bisphosphate + CO2 + H2O. It catalyses the reaction D-ribulose 1,5-bisphosphate + O2 = 2-phosphoglycolate + (2R)-3-phosphoglycerate + 2 H(+). In terms of biological role, ruBisCO catalyzes two reactions: the carboxylation of D-ribulose 1,5-bisphosphate, the primary event in carbon dioxide fixation, as well as the oxidative fragmentation of the pentose substrate. Both reactions occur simultaneously and in competition at the same active site. The protein is Ribulose bisphosphate carboxylase large chain of Paracoccus denitrificans (strain Pd 1222).